The primary structure comprises 211 residues: Transcriptional regulator GfcR (211 aa).

This sequence belongs to the purine/pyrimidine phosphoribosyltransferase family. GfcR subfamily.

Functionally, DNA-binding transcriptional regulator that functions as a regulator of central sugar catabolic pathways. The polypeptide is Transcriptional regulator GfcR (Halorubrum lacusprofundi (strain ATCC 49239 / DSM 5036 / JCM 8891 / ACAM 34)).